Consider the following 283-residue polypeptide: Flagellar filament 35 kDa core protein (283 aa).

This sequence belongs to the bacterial flagellin family. The flagellum consists of two outer layers around a core that contains several antigenically related polypeptides.

It is found in the periplasmic flagellum. It localises to the periplasm. Functionally, component of the core of the flagella. This chain is Flagellar filament 35 kDa core protein (flaB), found in Leptospira interrogans serogroup Icterohaemorrhagiae serovar Lai (strain 56601).